The sequence spans 389 residues: Carbamoyl phosphate synthase small chain (389 aa).

Residues 1–199 (MFNPAILVLA…AGKPFNLQTT (199 aa)) form a CPSase region. The L-glutamine site is built by Ser50, Gly251, and Gly253. The 187-residue stretch at 203-389 (HVVAYDFGIK…FINAVQATKA (187 aa)) folds into the Glutamine amidotransferase type-1 domain. The active-site Nucleophile is the Cys279. L-glutamine is bound by residues Leu280, Gln283, Asn321, Gly323, and Phe324. Catalysis depends on residues His363 and Glu365.

The protein belongs to the CarA family. Composed of two chains; the small (or glutamine) chain promotes the hydrolysis of glutamine to ammonia, which is used by the large (or ammonia) chain to synthesize carbamoyl phosphate. Tetramer of heterodimers (alpha,beta)4.

The catalysed reaction is hydrogencarbonate + L-glutamine + 2 ATP + H2O = carbamoyl phosphate + L-glutamate + 2 ADP + phosphate + 2 H(+). It carries out the reaction L-glutamine + H2O = L-glutamate + NH4(+). It participates in amino-acid biosynthesis; L-arginine biosynthesis; carbamoyl phosphate from bicarbonate: step 1/1. Its pathway is pyrimidine metabolism; UMP biosynthesis via de novo pathway; (S)-dihydroorotate from bicarbonate: step 1/3. Its function is as follows. Small subunit of the glutamine-dependent carbamoyl phosphate synthetase (CPSase). CPSase catalyzes the formation of carbamoyl phosphate from the ammonia moiety of glutamine, carbonate, and phosphate donated by ATP, constituting the first step of 2 biosynthetic pathways, one leading to arginine and/or urea and the other to pyrimidine nucleotides. The small subunit (glutamine amidotransferase) binds and cleaves glutamine to supply the large subunit with the substrate ammonia. The sequence is that of Carbamoyl phosphate synthase small chain from Haemophilus ducreyi (strain 35000HP / ATCC 700724).